An 880-amino-acid polypeptide reads, in one-letter code: Alanine--tRNA ligase (880 aa).

Zn(2+)-binding residues include histidine 548, histidine 552, cysteine 651, and histidine 655.

Belongs to the class-II aminoacyl-tRNA synthetase family. The cofactor is Zn(2+).

The protein localises to the cytoplasm. The catalysed reaction is tRNA(Ala) + L-alanine + ATP = L-alanyl-tRNA(Ala) + AMP + diphosphate. Functionally, catalyzes the attachment of alanine to tRNA(Ala) in a two-step reaction: alanine is first activated by ATP to form Ala-AMP and then transferred to the acceptor end of tRNA(Ala). Also edits incorrectly charged Ser-tRNA(Ala) and Gly-tRNA(Ala) via its editing domain. The polypeptide is Alanine--tRNA ligase (Tropheryma whipplei (strain TW08/27) (Whipple's bacillus)).